The sequence spans 478 residues: Endoplasmic reticulum oxidoreductin-1 (478 aa).

A signal peptide spans 1 to 20 (MREPLLQLIVLSLIIIVVNT). 6 disulfides stabilise this stretch: Cys-28-Cys-41, Cys-30-Cys-39, Cys-79-Cys-384, Cys-88-Cys-93, Cys-209-Cys-230, and Cys-387-Cys-390. The interval 117–143 (AAVKEEEDDDAEKCADAGNNIDPMDRT) is disordered. Positions 188, 190, and 201 each coordinate FAD. Positions 241, 244, 283, and 295 each coordinate FAD. Residue Asn-377 is glycosylated (N-linked (GlcNAc...) asparagine). Positions 459-478 (ESVMNTAADGPPRKSNKIDL) are disordered.

The protein belongs to the EROs family. As to quaternary structure, may function both as a monomer and a homodimer. FAD is required as a cofactor.

The protein localises to the endoplasmic reticulum membrane. Oxidoreductase involved in disulfide bond formation in the endoplasmic reticulum. Efficiently reoxidizes pdi-1, the enzyme catalyzing protein disulfide formation, in order to allow pdi-1 to sustain additional rounds of disulfide formation. Following pdi reoxidation, passes its electrons to molecular oxygen via FAD, leading to the production of reactive oxygen species (ROS) in the cell. The chain is Endoplasmic reticulum oxidoreductin-1 (ero-1) from Caenorhabditis elegans.